Reading from the N-terminus, the 406-residue chain is Phosphopentomutase (406 aa).

Residues Asp-10, Asp-305, His-310, Asp-346, His-347, and His-358 each contribute to the Mn(2+) site.

It belongs to the phosphopentomutase family. Requires Mn(2+) as cofactor.

It is found in the cytoplasm. It carries out the reaction 2-deoxy-alpha-D-ribose 1-phosphate = 2-deoxy-D-ribose 5-phosphate. It catalyses the reaction alpha-D-ribose 1-phosphate = D-ribose 5-phosphate. It functions in the pathway carbohydrate degradation; 2-deoxy-D-ribose 1-phosphate degradation; D-glyceraldehyde 3-phosphate and acetaldehyde from 2-deoxy-alpha-D-ribose 1-phosphate: step 1/2. Its function is as follows. Isomerase that catalyzes the conversion of deoxy-ribose 1-phosphate (dRib-1-P) and ribose 1-phosphate (Rib-1-P) to deoxy-ribose 5-phosphate (dRib-5-P) and ribose 5-phosphate (Rib-5-P), respectively. The polypeptide is Phosphopentomutase (Rhizobium meliloti (strain 1021) (Ensifer meliloti)).